Consider the following 571-residue polypeptide: Germacrene B synthase TPS16CC (571 aa).

(2E,6E)-farnesyl diphosphate contacts are provided by Arg287, Asp324, Asp328, Arg465, and Asp468. Positions 324 and 328 each coordinate Mg(2+). The DDXXD motif signature appears at 324 to 328; that stretch reads DDIYD. Positions 468, 472, and 476 each coordinate Mg(2+).

It belongs to the terpene synthase family. Tpsb subfamily. The cofactor is Mg(2+). It depends on Mn(2+) as a cofactor. As to expression, highly expressed in glandular trichomes.

It carries out the reaction (2E,6E)-farnesyl diphosphate = (1E,4E)-germacrene B + diphosphate. It functions in the pathway secondary metabolite biosynthesis; terpenoid biosynthesis. In terms of biological role, involved in sesquiterpene olefins biosynthesis, constituants of cannabinoids and terpenoids-rich resins. Catalyzes mainly the conversion of (2E)-farnesyl diphosphate to germacrene B, which is spontaneously converted to gamma-elemene as a thermal degradation product. The protein is Germacrene B synthase TPS16CC of Cannabis sativa (Hemp).